The chain runs to 968 residues: RNA polymerase-associated protein RapA (968 aa).

A Helicase ATP-binding domain is found at 164–334 (DVGRRHAPRV…FARLRLLDPN (171 aa)). 177 to 184 (DEVGLGKT) is an ATP binding site. The DEAH box motif lies at 280-283 (DEAH). The Helicase C-terminal domain occupies 490 to 662 (RVEWLMGYLT…YLASPDQTEG (173 aa)).

The protein belongs to the SNF2/RAD54 helicase family. RapA subfamily. In terms of assembly, interacts with the RNAP. Has a higher affinity for the core RNAP than for the holoenzyme. Its ATPase activity is stimulated by binding to RNAP.

Functionally, transcription regulator that activates transcription by stimulating RNA polymerase (RNAP) recycling in case of stress conditions such as supercoiled DNA or high salt concentrations. Probably acts by releasing the RNAP, when it is trapped or immobilized on tightly supercoiled DNA. Does not activate transcription on linear DNA. Probably not involved in DNA repair. The sequence is that of RNA polymerase-associated protein RapA from Escherichia coli O139:H28 (strain E24377A / ETEC).